The primary structure comprises 83 residues: Large ribosomal subunit protein bL27 (83 aa).

Belongs to the bacterial ribosomal protein bL27 family.

This is Large ribosomal subunit protein bL27 (rpmA) from Thermotoga maritima (strain ATCC 43589 / DSM 3109 / JCM 10099 / NBRC 100826 / MSB8).